The following is a 152-amino-acid chain: Deoxyuridine 5'-triphosphate nucleotidohydrolase (152 aa).

Residues 71-73 (RSG), Asn84, 88-90 (LID), and Lys98 contribute to the substrate site.

It belongs to the dUTPase family. It depends on Mg(2+) as a cofactor.

It catalyses the reaction dUTP + H2O = dUMP + diphosphate + H(+). The protein operates within pyrimidine metabolism; dUMP biosynthesis; dUMP from dCTP (dUTP route): step 2/2. Its function is as follows. This enzyme is involved in nucleotide metabolism: it produces dUMP, the immediate precursor of thymidine nucleotides and it decreases the intracellular concentration of dUTP so that uracil cannot be incorporated into DNA. The protein is Deoxyuridine 5'-triphosphate nucleotidohydrolase of Legionella pneumophila subsp. pneumophila (strain Philadelphia 1 / ATCC 33152 / DSM 7513).